A 121-amino-acid polypeptide reads, in one-letter code: Large ribosomal subunit protein uL24 (121 aa).

Belongs to the universal ribosomal protein uL24 family. Part of the 50S ribosomal subunit.

One of two assembly initiator proteins, it binds directly to the 5'-end of the 23S rRNA, where it nucleates assembly of the 50S subunit. Its function is as follows. Located at the polypeptide exit tunnel on the outside of the subunit. The protein is Large ribosomal subunit protein uL24 of Pyrococcus horikoshii (strain ATCC 700860 / DSM 12428 / JCM 9974 / NBRC 100139 / OT-3).